The following is a 268-amino-acid chain: Energy-coupling factor transporter transmembrane protein EcfT (268 aa).

5 helical membrane passes run 26-46 (IVTFVYIIVMLWASNWQTYAW), 72-92 (IFWLILFTVILQLLFTPGTPI), 106-126 (ILNAIYVMVRFVLIILMSTIL), 149-169 (IGVPVAELALMLAIALRFVPL), and 247-267 (VAFAALIGFVIIFFVIKTWLH).

This sequence belongs to the energy-coupling factor EcfT family. As to quaternary structure, forms a stable energy-coupling factor (ECF) transporter complex composed of 2 membrane-embedded substrate-binding proteins (S component), 2 ATP-binding proteins (A component) and 2 transmembrane proteins (T component). May be able to interact with more than 1 S component at a time.

It is found in the cell membrane. In terms of biological role, transmembrane (T) component of an energy-coupling factor (ECF) ABC-transporter complex. Unlike classic ABC transporters this ECF transporter provides the energy necessary to transport a number of different substrates. This is Energy-coupling factor transporter transmembrane protein EcfT from Leuconostoc gelidum subsp. gasicomitatum (strain DSM 15947 / CCUG 46042 / CECT 5767 / JCM 12535 / LMG 18811 / NBRC 113245 / TB1-10) (Leuconostoc gasicomitatum).